A 522-amino-acid polypeptide reads, in one-letter code: MSLLNCENSCGSSQSESDCCVAMASSCSAVTKDDSVGGTASTGNLSSSFMEEIQGYDVEFDPPLESKYECPICLMALREAVQTPCGHRFCKACIIKSIRDAGHKCPVDNEILLENQLFPDNFAKREILSLMVKCPNEGCLHKMELRHLEDHQAHCEFALMDCPQCQRPFQKFHINIHILKDCPRRQVSCDNCAASMAFEDKEIHDQNCPLANVICEYCNTILIREQMPNHYDLDCPTAPIPCTFSTFGCHEKMQRNHLARHLQENTQSHMRMLAQAVHSLSVIPDSGYISEVRNFQETIHQLEGRLVRQDHQIRELTAKMETQSMYVSELKRTIRTLEDKVAEIEAQQCNGIYIWKIGNFGMHLKCQEEEKPVVIHSPGFYTGKPGYKLCMRLHLQLPTAQRCANYISLFVHTMQGEYDSHLPWPFQGTIRLTILDQSEAPVRQNHEEIMDAKPELLAFQRPTIPRNPKGFGYVTFMHLEALRQRTFIKDDTLLVRCEVSTRFDMGSLRREGFQPRSTDAGV.

Residues 1-354 (MSLLNCENSC…EAQQCNGIYI (354 aa)) are interaction with TAX1BP1. The RING-type zinc-finger motif lies at 70–109 (CPICLMALREAVQTPCGHRFCKACIIKSIRDAGHKCPVDN). Lys-124 participates in a covalent cross-link: Glycyl lysine isopeptide (Lys-Gly) (interchain with G-Cter in SUMO); alternate. A Glycyl lysine isopeptide (Lys-Gly) (interchain with G-Cter in ubiquitin); alternate cross-link involves residue Lys-124. Lys-142 is covalently cross-linked (Glycyl lysine isopeptide (Lys-Gly) (interchain with G-Cter in SUMO)). 2 consecutive TRAF-type zinc fingers follow at residues 150-202 (DHQA…EDKE) and 203-259 (IHDQ…NHLA). Residues 288–348 (YISEVRNFQE…DKVAEIEAQQ (61 aa)) are a coiled coil. Lys-319 is covalently cross-linked (Glycyl lysine isopeptide (Lys-Gly) (interchain with G-Cter in ubiquitin)). In terms of domain architecture, MATH spans 350–499 (NGIYIWKIGN…DDTLLVRCEV (150 aa)). The tract at residues 355–522 (WKIGNFGMHL…FQPRSTDAGV (168 aa)) is interaction with TANK. Residue Lys-453 forms a Glycyl lysine isopeptide (Lys-Gly) (interchain with G-Cter in SUMO) linkage.

The protein belongs to the TNF receptor-associated factor family. A subfamily. In terms of assembly, homotrimer. Homooligomer. N-terminal region is dimeric while C-terminal region is trimeric; maybe providing a mode of oligomerization. Upon IL1B treatment, forms a complex with PELI1, IRAK1, IRAK4 and MYD88; this complex recruits MAP3K7/TAK1, TAB1 and TAB2 to mediate NF-kappa-B activation. Direct binding of SMAD6 to PELI1 prevents the complex formation and hence negatively regulates IL1R-TLR signaling and eventually NF-kappa-B-mediated gene expression. Binds to TNFRSF5/CD40 and TNFRSF11A/RANK. Associates with NGFR, TNFRSF17, IRAK2, IRAK3, RIPK2, MAP3K1, MAP3K5, MAP3K14, CSK, TRAF, TRAF-interacting protein TRIP and TNF receptor associated protein TDP2. Interacts with IL17R. Interacts with SQSTM1 bridging NTRK1 and NGFR. Forms a ternary complex with SQSTM1 and PRKCZ. Interacts with PELI2 and PELI3. Binds UBE2V1. Interacts with TAX1BP1; this interaction mediates deubiquitination of TRAF6 and inhibition of NF-kappa-B activation. Interacts with ZNF675. Interacts with ARRB1 and ARRB2. Interacts with MAP3K7 and TAB1/MAP3K7IP1; during IL-1 signaling. Interacts with UBE2N. Interacts with TGFBR1, HDAC1 and RANGAP1. Interacts with AKT1, AKT2 and AKT3. Interacts (via TRAF domains) with NUMBL (via C-terminal). Interacts with RBCK1. Interacts with LIMD1 (via LIM domains). Interacts with RSAD2/viperin. Interacts (via C-terminus) with EIF2AK2/PKR (via the kinase catalytic domain). Interacts with ZFAND5. Interacts with IL1RL1. Interacts with TRAFD1. Interacts with AJUBA. Interacts with MAVS/IPS1. Interacts (via TRAF domains) with DYNC2I2 (via WD domains). Interacts with IFIT3 (via N-terminus). Interacts with TICAM2. Interacts with CARD14. Interacts with CD40 and MAP3K8; the interaction is required for ERK activation. Interacts with TICAM1 and this interaction is enhanced in the presence of WDFY1. Interacts with TANK; this interaction increases in response to DNA damage. Interacts with USP10; this interaction increases in response to DNA damage. Interacts with ZC3H12A; this interaction increases in response to DNA damage and is stimulated by TANK. Interacts with WDFY3. Interacts with TRIM13. Interacts with GPS2. Interacts (via C-terminus) with SASH1. Interacts with LRRC19. Interacts with IL17RA and TRAF3IP2. Interacts with TOMM70. Interacts with AMBRA1; interaction is required to mediate 'Lys-63'-linked ubiquitination of ULK1. Interacts with CRBN; this interaction inhibits TLR4-mediated signaling by preventing TRAF6-mediated ubiquitination of ECSIT. In terms of processing, sumoylated on Lys-124, Lys-142 and Lys-453 with SUMO1. Polyubiquitinated on Lys-124 by TRAF3IP2; after cell stimulation with IL17A. Polyubiquitinated on Lys-124; after cell stimulation with IL1B or TGFB. This ligand-induced cell stimulation leads to dimerization/oligomerization of TRAF6 molecules, followed by auto-ubiquitination which involves UBE2N and UBE2V1 and leads to TRAF6 activation. This 'Lys-63' site-specific poly-ubiquitination appears to be associated with the activation of signaling molecules. Endogenous autoubiquitination occurs only for the cytoplasmic form. Deubiquitinated by USP10 in a TANK-dependent manner, leading to the negative regulation of NF-kappaB signaling upon DNA damage. LRRC19 induces 'Lys-63' ubiquitination. Ubiquitinated at Lys-319 by the SCF(FBXL2) complex, leading to its degradation by the proteasome. Post-translationally, (Microbial infection) Deubiquitinated by Epstein-Barr virus BPLF1 on both 'Lys-48' and 'Lys-63'-linked ubiquitin chains; leading to NF-kappa-B signaling inhibition. As to expression, expressed in heart, brain, placenta, lung, liver, skeletal muscle, kidney and pancreas.

It is found in the cytoplasm. The protein resides in the cell cortex. Its subcellular location is the nucleus. It localises to the lipid droplet. It catalyses the reaction S-ubiquitinyl-[E2 ubiquitin-conjugating enzyme]-L-cysteine + [acceptor protein]-L-lysine = [E2 ubiquitin-conjugating enzyme]-L-cysteine + N(6)-ubiquitinyl-[acceptor protein]-L-lysine.. Its pathway is protein modification; protein ubiquitination. In terms of biological role, E3 ubiquitin ligase that, together with UBE2N and UBE2V1, mediates the synthesis of 'Lys-63'-linked-polyubiquitin chains conjugated to proteins, such as ECSIT, IKBKG, IRAK1, AKT1 and AKT2. Also mediates ubiquitination of free/unanchored polyubiquitin chain that leads to MAP3K7 activation. Leads to the activation of NF-kappa-B and JUN. Seems to also play a role in dendritic cells (DCs) maturation and/or activation. Represses c-Myb-mediated transactivation, in B-lymphocytes. Adapter protein that seems to play a role in signal transduction initiated via TNF receptor, IL-1 receptor and IL-17 receptor. Regulates osteoclast differentiation by mediating the activation of adapter protein complex 1 (AP-1) and NF-kappa-B, in response to RANK-L stimulation. Together with MAP3K8, mediates CD40 signals that activate ERK in B-cells and macrophages, and thus may play a role in the regulation of immunoglobulin production. Acts as a regulator of the JNK and NF-kappa-B signaling pathways by initiating assembly of heterotypic 'Lys-63'-/'Lys-48'-linked branched ubiquitin chains that are then recognized by TAB2: TRAF6 catalyzes initial 'Lys-63'-linked-polyubiquitin chains that are then branched via 'Lys-48'-linked polyubiquitin by HUWE1. 'Lys-63'-/'Lys-48'-linked branched ubiquitin chains protect 'Lys-63'-linkages from CYLD deubiquitination. Participates also in the TCR signaling by ubiquitinating LAT. The sequence is that of TNF receptor-associated factor 6 (TRAF6) from Homo sapiens (Human).